Reading from the N-terminus, the 339-residue chain is Ribosomal RNA small subunit methyltransferase C (339 aa).

Belongs to the methyltransferase superfamily. RsmC family. Monomer.

Its subcellular location is the cytoplasm. The enzyme catalyses guanosine(1207) in 16S rRNA + S-adenosyl-L-methionine = N(2)-methylguanosine(1207) in 16S rRNA + S-adenosyl-L-homocysteine + H(+). Its function is as follows. Specifically methylates the guanine in position 1207 of 16S rRNA in the 30S particle. This Photobacterium profundum (strain SS9) protein is Ribosomal RNA small subunit methyltransferase C.